The following is a 45-amino-acid chain: Bacteriocin fulvocin-C (45 aa).

Bacteriocin. The chain is Bacteriocin fulvocin-C from Myxococcus fulvus.